The sequence spans 566 residues: Glucose starvation modulator protein 1 (566 aa).

A DNA-binding region (zn(2)-C6 fungal-type) is located at residues 20–48 (CVFCHQKHLQCSNERPCKNCVKRNIAHGC). 2 disordered regions span residues 63-92 (GVPG…SPMD) and 250-270 (KQAS…NTLS). Low complexity predominate over residues 253-270 (SPSPSNTSTSENNTNTLS).

Belongs to the ERT1/acuK family.

It is found in the nucleus. Functionally, transcription factor which regulates nonfermentable carbon utilization. The chain is Glucose starvation modulator protein 1 (GSM1) from Candida albicans (strain WO-1) (Yeast).